The sequence spans 354 residues: Guanine nucleotide-binding protein G(t) subunit alpha-3 (354 aa).

Residues 1–26 (MGIGISSESKESAKRSKELEKKLQED) are disordered. Glycine 2 is lipidated: N-myristoyl glycine. Residues 8 to 26 (ESKESAKRSKELEKKLQED) are compositionally biased toward basic and acidic residues. The 323-residue stretch at 32-354 (RTVKLLLLGA…KENLKDCGLF (323 aa)) folds into the G-alpha domain. The segment at 35 to 48 (KLLLLGAGESGKST) is G1 motif. Residues 40-47 (GAGESGKS), 175-181 (LHSRVKT), 200-204 (DVGGQ), 269-272 (NKKD), and alanine 326 each bind GTP. Positions 47 and 181 each coordinate Mg(2+). The interval 173 to 181 (DVLHSRVKT) is G2 motif. Positions 196–205 (FRMFDVGGQR) are G3 motif. The interval 265 to 272 (VLFLNKKD) is G4 motif. Residues 324–329 (TCATDT) form a G5 motif region.

This sequence belongs to the G-alpha family. G(i/o/t/z) subfamily. As to quaternary structure, g proteins are composed of 3 units; alpha, beta and gamma, respectively GNAT3, GNB1 and GNG13 for Gustducin heterotrimer for bitter taste transduction. The alpha chain contains the guanine nucleotide binding site. Component of the TAS2R14-GNAT3 complex, consisting of TAS2R14, GNAT3, GNB1 and GNG2; within the complex interacts with TAS2R14; this complex plays a role in the perception of bitterness. Gustducin heterotrimer may also be composed of GNAT3, GNB3 and GNG13. As to expression, expressed in epithelial cells of taste buds of the circumvallate, foliate and fungiform. Detected in various region of the respiratory track. Expressed also in spermatozoa.

Its subcellular location is the cytoplasm. Functionally, guanine nucleotide-binding protein (G protein) alpha subunit playing a prominent role in bitter and sweet taste transduction as well as in umami (monosodium glutamate, monopotassium glutamate, and inosine monophosphate) taste transduction. The sequence is that of Guanine nucleotide-binding protein G(t) subunit alpha-3 (GNAT3) from Bos taurus (Bovine).